A 359-amino-acid polypeptide reads, in one-letter code: N-acetylneuraminate-9-phosphate synthase (359 aa).

Residues Lys-61, Lys-74, and Lys-79 each carry the N6-acetyllysine modification. Phosphoserine is present on Ser-275. Lys-290 carries the post-translational modification N6-acetyllysine. An AFP-like domain is found at 294–353 (SVVAKVKIPAGTTLTLDMLTVKVGEPKGYPPEDIFNLAGKKVLVTIEEDDTVMEESVESH).

In terms of tissue distribution, ubiquitous.

It is found in the cytoplasm. The enzyme catalyses aldehydo-N-acetyl-D-mannosamine 6-phosphate + phosphoenolpyruvate + H2O = N-acetylneuraminate 9-phosphate + phosphate. Its function is as follows. Catalyzes condensation of phosphoenolpyruvate (PEP) and N-acetylmannosamine 6-phosphate (ManNAc-6-P) to synthesize N-acetylneuraminate-9-phosphate (Neu5Ac-9-P). Neu5Ac-9-P is the phosphorylated forms of sialic acid N-acetylneuraminic acid (Neu5Ac). In contrast with human ortholog, has no detectable activity towards D-mannose 6-phosphate. This chain is N-acetylneuraminate-9-phosphate synthase, found in Mus musculus (Mouse).